The chain runs to 117 residues: Ig heavy chain V-A2 region K-25 (117 aa).

At Q1 the chain carries Pyrrolidone carboxylic acid. Residues Q1–D106 enclose the Ig-like domain. A disulfide bridge connects residues C21 and C91.

The polypeptide is Ig heavy chain V-A2 region K-25 (Oryctolagus cuniculus (Rabbit)).